We begin with the raw amino-acid sequence, 526 residues long: NAD(P)H-quinone oxidoreductase subunit 2 (526 aa).

Helical transmembrane passes span 16 to 36, 43 to 63, 80 to 100, 110 to 130, 133 to 153, 168 to 188, 212 to 232, 246 to 266, 280 to 300, 308 to 328, 336 to 356, 380 to 400, 402 to 422, and 468 to 488; these read ILPEGIVVITLLVVLVGDLIL, WTPYAAIVGLLGAIVALYTQW, LSIAFRGIIAISAITTILMSV, LGEFICILLTATLGAMFLSGA, LVMIFISLETLSISSYLLTGY, LLIGAASSAIFLYGISLLYGL, LALVIALVFAIAGISFKISAV, PTPVVAFLSVGSKAAGFALAI, WHFVFTALAILSMVLGNVVAL, LLAYSSIGQAGFVMIGLLANT, IFYLLVYLFMNLGGFTCVILF, LGLSLCLLSLGGIPPLAGFFG, IYLFWAGWQAGLYWLVLLGLI, and VGLILSVLATSLAGILSNPLF.

This sequence belongs to the complex I subunit 2 family. NDH-1 can be composed of about 15 different subunits; different subcomplexes with different compositions have been identified which probably have different functions.

The protein resides in the cellular thylakoid membrane. It carries out the reaction a plastoquinone + NADH + (n+1) H(+)(in) = a plastoquinol + NAD(+) + n H(+)(out). The enzyme catalyses a plastoquinone + NADPH + (n+1) H(+)(in) = a plastoquinol + NADP(+) + n H(+)(out). Its function is as follows. NDH-1 shuttles electrons from an unknown electron donor, via FMN and iron-sulfur (Fe-S) centers, to quinones in the respiratory and/or the photosynthetic chain. The immediate electron acceptor for the enzyme in this species is believed to be plastoquinone. Couples the redox reaction to proton translocation, and thus conserves the redox energy in a proton gradient. Cyanobacterial NDH-1 also plays a role in inorganic carbon-concentration. This chain is NAD(P)H-quinone oxidoreductase subunit 2, found in Trichodesmium erythraeum (strain IMS101).